The following is a 1032-amino-acid chain: Kinesin heavy chain isoform 5A (1032 aa).

The residue at position 2 (A2) is an N-acetylalanine. One can recognise a Kinesin motor domain in the interval 9 to 327; sequence SIKVLCRFRP…LMFGQRAKTI (319 aa). 86-93 lines the ATP pocket; that stretch reads GQTSSGKT. Residues 174–315 are microtubule-binding; that stretch reads VSGPEEILDV…PSSYNDAETK (142 aa). The necessary for interaction with ZFYVE27 stretch occupies residues 271-361; the sequence is EGTKSYVPYR…KTKAQKETIA (91 aa). A coiled-coil region spans residues 331–906; sequence ASVNLELTAE…VDRIKEAVRY (576 aa). Positions 353–1032 are interaction with BICD2; the sequence is TKAQKETIAK…FPLHQETAAS (680 aa). Phosphothreonine is present on T397. Residues 904–939 form a disordered region; that stretch reads VRYKSSGKRGHSAQIAKPVRPGHYPASSPTNPYGTR. Residues 907-1032 are globular; it reads KSSGKRGHSA…FPLHQETAAS (126 aa).

The protein belongs to the TRAFAC class myosin-kinesin ATPase superfamily. Kinesin family. Kinesin subfamily. Oligomer composed of two heavy chains and two light chains. Interacts with GRIP1. Interacts with FMR1 (via C-terminus); this interaction is increased in a mGluR-dependent manner. Interacts with BORCS5. Interacts with ZFYVE27. Interacts with VAPA, VAPB, SURF4, RAB11A (GDP-bound form), RAB11B (GDP-bound form) and RTN3 in a ZFYVE27-dependent manner. Interacts with BICD2. Interacts with DTNB.

The protein localises to the cytoplasm. The protein resides in the perinuclear region. It localises to the cytoskeleton. Its subcellular location is the perikaryon. It catalyses the reaction ATP + H2O + a kinesin associated with a microtubule at position (n) = ADP + phosphate a kinesin associated with a microtubule at position (n+1, toward the plus end).. Functionally, microtubule-dependent motor required for slow axonal transport of neurofilament proteins (NFH, NFM and NFL). Can induce formation of neurite-like membrane protrusions in non-neuronal cells in a ZFYVE27-dependent manner. The ZFYVE27-KIF5A complex contributes to the vesicular transport of VAPA, VAPB, SURF4, RAB11A, RAB11B and RTN3 proteins in neurons. Required for anterograde axonal transportation of MAPK8IP3/JIP3 which is essential for MAPK8IP3/JIP3 function in axon elongation. In Pongo abelii (Sumatran orangutan), this protein is Kinesin heavy chain isoform 5A (KIF5A).